The following is an 877-amino-acid chain: MDKKKLLLIDGSSVAFRAFFALYQQLDRFKNAAGLHTNAIYGFQLMLSHLLERVEPSHILVAFDAGKTTFRTEMYADYKGGRAKTPDEFREQFPFIRELLDHMGIRHYELAQYEADDIIGTLDKLAEQDGFDITIVSGDKDLIQLTDEHTVVEISKKGVAEFEAFTPDYLMEEMGLTPAQFIDLKALMGDKSDNIPGVTKVGEKTGIKLLLEHGSLEGIYENIDGMKTSKMKENLINDKEQAFLSKTLATIDTKAPIAIGLEDLVYSGPDVENLGKFYDEMGFKQLKQALNMSSADVAEGLDFTIVDQISQDMLSEESIFHFELFGENYHTDNLVGFAWSCGDQLYATDKLELLQDPIFKDFLEKTSLRVYDFKKVKVLLQRFGVDLQAPAFDIRLAKYLLSTVEDNEIATIASLYGQTYLVDDETFYGKGVKKAIPEREKFLEHLACKLAVLVETEPILLEKLSENGQLELLYDMEQPLAFVLAKMEIAGIVVKKETLLEMQAENELVIEKLTQEIYELAGEEFNVNSPKQLGVLLFEKLGLPLEYTKKTKTGYSTAVDVLERLAPIAPIVKKILDYRQIAKIQSTYVIGLQDWILADGKIHTRYVQDLTQTGRLSSVDPNLQNIPARLEQGRLIRKAFVPEWEDSVLLSSDYSQIELRVLAHISKDEHLIKAFQEGADIHTSTAMRVFGIERPDNVTANDRRNAKAVNFGVVYGISDFGLSNNLGISRKEAKAYIDTYFERFPGIKNYMDEVVREARDKGYVETLFKRRRELPDINSRNFNIRGFAERTAINSPIQGSAADILKIAMIQLDKALVAGGYQTKMLLQVHDEIVLEVPKSELVEMKKLVKQTMEEAIQLSVPLIADENEGATWYEAK.

Residues 177–270 form the 5'-3' exonuclease domain; sequence TPAQFIDLKA…LEDLVYSGPD (94 aa). A 3'-5' exonuclease domain is found at 302-465; that stretch reads DFTIVDQISQ…TEPILLEKLS (164 aa).

This sequence belongs to the DNA polymerase type-A family. In terms of assembly, single-chain monomer with multiple functions.

The enzyme catalyses DNA(n) + a 2'-deoxyribonucleoside 5'-triphosphate = DNA(n+1) + diphosphate. Its function is as follows. In addition to polymerase activity, this DNA polymerase exhibits 3'-5' and 5'-3' exonuclease activity. The protein is DNA polymerase I (polA) of Streptococcus pneumoniae (strain ATCC BAA-255 / R6).